We begin with the raw amino-acid sequence, 700 residues long: Interleukin-1 receptor accessory protein-like 1-B (700 aa).

The signal sequence occupies residues 1-18 (MRSRVPLQILLYAAVIRS). Over 19-357 (LKVVSKRGSV…QLSRRELMYT (339 aa)) the chain is Extracellular. The Ig-like C2-type 1 domain occupies 32 to 134 (TDWSVDYLRY…YCMKVSMALT (103 aa)). Cysteine 53 and cysteine 118 are joined by a disulfide. N-linked (GlcNAc...) asparagine glycans are attached at residues asparagine 63, asparagine 122, asparagine 138, asparagine 213, asparagine 264, and asparagine 331. Ig-like C2-type domains lie at 143–232 (CYNS…TELT) and 242–350 (PKIL…IQLS). Cysteine 164 and cysteine 216 are oxidised to a cystine. A disulfide bridge links cysteine 267 with cysteine 334. A helical transmembrane segment spans residues 358–378 (VELAGGLGAILLMLIFLVSLY). Residues 379-700 (KCYRIELMLF…RETSISSVIW (322 aa)) lie on the Cytoplasmic side of the membrane. Residues 403-559 (KDYDAYVSYT…RFWKQLQYEM (157 aa)) form the TIR domain. The active site involves glutamate 491. A required for synaptic vesicle accumulation during synaptogenesis region spans residues 564 to 700 (PEPKLSHEQV…RETSISSVIW (137 aa)).

The protein belongs to the interleukin-1 receptor family.

It is found in the cell membrane. It localises to the cytoplasm. The enzyme catalyses NAD(+) + H2O = ADP-D-ribose + nicotinamide + H(+). In terms of biological role, may regulate secretion and presynaptic differentiation through inhibition of the activity of N-type voltage-gated calcium channel. During presynaptic differentiation may regulate both synaptic vesicle accumulation in axon terminals and subsequent axon terminal remodeling. The protein is Interleukin-1 receptor accessory protein-like 1-B (il1rapl1b) of Danio rerio (Zebrafish).